Consider the following 494-residue polypeptide: NAD(P)H-quinone oxidoreductase subunit 2 B, chloroplastic (494 aa).

Helical transmembrane passes span Leu-6–Leu-26, Thr-39–Phe-59, Ile-81–Ile-101, Met-106–Cys-126, Leu-131–Tyr-151, Leu-166–Leu-186, Ile-211–Phe-231, Trp-277–Ile-297, Met-305–Asp-325, Tyr-336–Leu-356, Ala-377–Phe-397, Leu-413–Ile-433, and Met-468–Ile-488.

The protein belongs to the complex I subunit 2 family. In terms of assembly, NDH is composed of at least 16 different subunits, 5 of which are encoded in the nucleus.

Its subcellular location is the plastid. It localises to the chloroplast thylakoid membrane. The enzyme catalyses a plastoquinone + NADH + (n+1) H(+)(in) = a plastoquinol + NAD(+) + n H(+)(out). It catalyses the reaction a plastoquinone + NADPH + (n+1) H(+)(in) = a plastoquinol + NADP(+) + n H(+)(out). Its function is as follows. NDH shuttles electrons from NAD(P)H:plastoquinone, via FMN and iron-sulfur (Fe-S) centers, to quinones in the photosynthetic chain and possibly in a chloroplast respiratory chain. The immediate electron acceptor for the enzyme in this species is believed to be plastoquinone. Couples the redox reaction to proton translocation, and thus conserves the redox energy in a proton gradient. The polypeptide is NAD(P)H-quinone oxidoreductase subunit 2 B, chloroplastic (Cycas taitungensis (Prince sago)).